Reading from the N-terminus, the 715-residue chain is Polyribonucleotide nucleotidyltransferase (715 aa).

Positions 488 and 494 each coordinate Mg(2+). In terms of domain architecture, KH spans 555 to 614 (PKIETIKIPVDKIREVIGSGGKVIREIVEKTGAKIDIGEDGTIKIAAAEQTKIDAAKEWI). Residues 624-692 (GQIYTGKVVK…DRGKTRLSMK (69 aa)) enclose the S1 motif domain. The disordered stretch occupies residues 692 to 715 (KVVDQETGEDLSKSNEKAEEPADA). Over residues 701 to 715 (DLSKSNEKAEEPADA) the composition is skewed to basic and acidic residues.

It belongs to the polyribonucleotide nucleotidyltransferase family. Mg(2+) is required as a cofactor.

It localises to the cytoplasm. The catalysed reaction is RNA(n+1) + phosphate = RNA(n) + a ribonucleoside 5'-diphosphate. In terms of biological role, involved in mRNA degradation. Catalyzes the phosphorolysis of single-stranded polyribonucleotides processively in the 3'- to 5'-direction. The polypeptide is Polyribonucleotide nucleotidyltransferase (Phenylobacterium zucineum (strain HLK1)).